The sequence spans 89 residues: Sec-independent protein translocase protein TatA (89 aa).

The helical transmembrane segment at 1–21 (MFGLSPAQLIILLVVILLIFG) threads the bilayer.

The protein belongs to the TatA/E family. As to quaternary structure, the Tat system comprises two distinct complexes: a TatABC complex, containing multiple copies of TatA, TatB and TatC subunits, and a separate TatA complex, containing only TatA subunits. Substrates initially bind to the TatABC complex, which probably triggers association of the separate TatA complex to form the active translocon.

It is found in the cell inner membrane. In terms of biological role, part of the twin-arginine translocation (Tat) system that transports large folded proteins containing a characteristic twin-arginine motif in their signal peptide across membranes. TatA could form the protein-conducting channel of the Tat system. This is Sec-independent protein translocase protein TatA from Haemophilus influenzae (strain ATCC 51907 / DSM 11121 / KW20 / Rd).